Consider the following 425-residue polypeptide: Probable threonylcarbamoyladenosine tRNA methylthiotransferase (425 aa).

One can recognise an MTTase N-terminal domain in the interval 2–110 (VKVYIENYGC…IVQAVEYAMR (109 aa)). [4Fe-4S] cluster contacts are provided by cysteine 11, cysteine 47, cysteine 76, cysteine 148, cysteine 152, and cysteine 155. The Radical SAM core domain maps to 134–363 (SPRNVYFILP…HRIRLQISYE (230 aa)). Residues 366–425 (RKYIGKKVKVLIHGEGKKGNVDAVTMNYKHIILPEGRKGEFREARVKNAASTYLLGEIIT) enclose the TRAM domain.

This sequence belongs to the methylthiotransferase family. CDKAL1 subfamily. [4Fe-4S] cluster is required as a cofactor.

The catalysed reaction is N(6)-L-threonylcarbamoyladenosine(37) in tRNA + (sulfur carrier)-SH + AH2 + 2 S-adenosyl-L-methionine = 2-methylsulfanyl-N(6)-L-threonylcarbamoyladenosine(37) in tRNA + (sulfur carrier)-H + 5'-deoxyadenosine + L-methionine + A + S-adenosyl-L-homocysteine + 2 H(+). Catalyzes the methylthiolation of N6-threonylcarbamoyladenosine (t(6)A), leading to the formation of 2-methylthio-N6-threonylcarbamoyladenosine (ms(2)t(6)A) at position 37 in tRNAs that read codons beginning with adenine. The polypeptide is Probable threonylcarbamoyladenosine tRNA methylthiotransferase (Pyrococcus horikoshii (strain ATCC 700860 / DSM 12428 / JCM 9974 / NBRC 100139 / OT-3)).